Consider the following 277-residue polypeptide: Phosphatidylglycerol--prolipoprotein diacylglyceryl transferase (277 aa).

The next 4 helical transmembrane spans lie at 18–38 (IAIYWYAVLILLGVAVGYFMA), 54–74 (DLLVWALPISILSARAYYVIF), 91–111 (EGGIAIHGALIGAVVTAIVFA), and 115–135 (GLSFWKLADVAAPSILIGQAI). R137 serves as a coordination point for a 1,2-diacyl-sn-glycero-3-phospho-(1'-sn-glycerol). 3 helical membrane passes run 177 to 197 (QPTFLYESLWNVLGVVVLLLL), 205 to 225 (GELFLSYVIWYSVGRFVIEGM), and 236 to 256 (LRTAQLLSIILVVAAIALWVY).

This sequence belongs to the Lgt family.

It is found in the cell membrane. The catalysed reaction is L-cysteinyl-[prolipoprotein] + a 1,2-diacyl-sn-glycero-3-phospho-(1'-sn-glycerol) = an S-1,2-diacyl-sn-glyceryl-L-cysteinyl-[prolipoprotein] + sn-glycerol 1-phosphate + H(+). It functions in the pathway protein modification; lipoprotein biosynthesis (diacylglyceryl transfer). In terms of biological role, catalyzes the transfer of the diacylglyceryl group from phosphatidylglycerol to the sulfhydryl group of the N-terminal cysteine of a prolipoprotein, the first step in the formation of mature lipoproteins. The polypeptide is Phosphatidylglycerol--prolipoprotein diacylglyceryl transferase (Shouchella clausii (strain KSM-K16) (Alkalihalobacillus clausii)).